A 1098-amino-acid chain; its full sequence is MPIVDKLKEALKPGRKDSAEDGDLGRLLAASAKKVLLQRIEFEPASKSFSYQLESLKSKYVLLSARAEGASRHRSGDELQARKPGTERVSGSGGDGVPAPQKVLFPVERLSLRWERVFRVGAGLHNLGNTCFLNSTIQCLTYTPPLANYLLSKEHARSCHQGGFCMLCLMQNHMVQAFANSGNAIKPVSFIRDLKKIARHFRFGNQEDAHEFLRYTIDAMQKACLNGYAKLDRQTQATTLVHQIFGGYLRSRVKCSVCKSVSDTYDPYLDIALEIRQAANIVRALELFVKSDVLSGENAYMCAKCKKKVPASKRFTIHRTSNVLTLSLKRFANFSGGKITKDVGYPEFLNIRPYMSQSSGDPVMYGLYAVLVHSGYSCHAGHYYCYVKASNGQWYQMNDSLVHSSNVKVVLNQQAYVLFYLRIPGSKKSPEGPVSRVGATLPSRPKVVPEHSKKSPGNGVVPSPLMAKRQDSVMMRKLPAPEEVGVPVSRNGSLPGLKLQNGCAPAKTPAGSPSPRLTPTPTHMPTILDEPGKKVKKSAPLQSLTTSPTTSQGSPGTGESRSQRPGSWASRDTIFSTSPKLLARAITNGHRLKGEGSGVDLEKGDSSSSSPEHSASSDPAKAPQTAESRAAHACDSQGTNCPTAGHPKALLNGVDAKMVKLKSPALSSTTTEPTSLMSPPPAKKLALSAKKASTLRRATGNDIGSPSPSAFCDLTSPMKATHPVVASTGPVSKTRTAAPAPRPSTHPHSASLSSSSAKPLGTSEPQSCRPSAWTPLPQVNGHFTSHLHQLPEASEALHSPSKKRKKTPNGDPQRLGIDTLLPQCLRGAPAAARRKRKKRCSEGEGATAPKQEGQFQDQSWSSGSQKEEGTQPQVNGHQVSHILDSYHVSSRKRRKRKRSEGLSQEATPSQDLIQHSCSPVDHSEPEARTELQKKKKKKRRKRKPEPQQDEESKHPGDQRSPRPSVTPVPALSVNGHLPSDCLGLGQAPLVTWNRDQEPDVVQALLQDSSDKAYGKKVLTWDGEPSAISQDAIKDSRLARTQTVVDDWDEEFDRGKEKKIKKFKREKKRNFNAFQKLQSRRNFWSVTHPAKVASLSYRR.

Residues 72–86 (RHRSGDELQARKPGT) show a composition bias toward basic and acidic residues. Residues 72–97 (RHRSGDELQARKPGTERVSGSGGDGV) are disordered. Positions 122 to 423 (AGLHNLGNTC…QAYVLFYLRI (302 aa)) constitute a USP domain. Residue C131 is the Nucleophile of the active site. H382 serves as the catalytic Proton acceptor. Disordered regions lie at residues 428 to 464 (KSPEGPVSRVGATLPSRPKVVPEHSKKSPGNGVVPSP) and 483 to 574 (EVGV…RDTI). Residues S429, S463, S547, and S578 each carry the phosphoserine modification. The segment covering 540–558 (PLQSLTTSPTTSQGSPGTG) has biased composition (low complexity). The tract at residues 589–640 (GHRLKGEGSGVDLEKGDSSSSSPEHSASSDPAKAPQTAESRAAHACDSQGTN) is disordered. The segment covering 606-617 (SSSSSPEHSASS) has biased composition (low complexity). S663 is subject to Phosphoserine. 2 disordered regions span residues 664–710 (PALS…SPSA) and 722–973 (HPVV…ALSV). The segment covering 665 to 677 (ALSSTTTEPTSLM) has biased composition (polar residues). S678 carries the post-translational modification Phosphoserine. The segment covering 683 to 692 (KKLALSAKKA) has biased composition (low complexity). At S709 the chain carries Phosphoserine. The segment covering 746–763 (HPHSASLSSSSAKPLGTS) has biased composition (low complexity). Positions 853–878 (GQFQDQSWSSGSQKEEGTQPQVNGHQ) are enriched in polar residues. Residues 889-898 (SSRKRRKRKR) are compositionally biased toward basic residues. Over residues 901-917 (GLSQEATPSQDLIQHSC) the composition is skewed to polar residues. Basic and acidic residues predominate over residues 921 to 932 (DHSEPEARTELQ). The segment covering 933-943 (KKKKKKRRKRK) has biased composition (basic residues). Residues 944 to 960 (PEPQQDEESKHPGDQRS) are compositionally biased toward basic and acidic residues.

This sequence belongs to the peptidase C19 family. As to quaternary structure, interacts with isoform 3 of FBXW7; the interaction inhibits MYC degradation induced by SCF(FBW7) complex. Interacts with NTRK1; USP36 does not deubiquitinate NTRK1. Interacts with NEDD4L (via domains WW1, 3 and 4); the interaction inhibits ubiquitination of, at least, NTRK1, KCNQ2 and KCNQ3 by NEDD4L. Interacts (via C-terminus) with EXOSC10 (via C-terminus); the interaction is facilitated by the association with RNA and promotes sumoylation of EXOSC10. Polyubiquitinated by NEDD4L, no effect on USP36 protein levels. Both proteins interact with and regulate each other's ubiquitination levels.

The protein resides in the nucleus. The protein localises to the nucleolus. Its subcellular location is the cytoplasm. The catalysed reaction is Thiol-dependent hydrolysis of ester, thioester, amide, peptide and isopeptide bonds formed by the C-terminal Gly of ubiquitin (a 76-residue protein attached to proteins as an intracellular targeting signal).. Functionally, deubiquitinase essential for the regulation of nucleolar structure and function. Required for cell and organism viability. Plays an important role in ribosomal RNA processing and protein synthesis, which is mediated, at least in part, through deubiquitination of DHX33, NPM1 and FBL, regulating their protein stability. Functions as a transcriptional repressor by deubiquiting histone H2B at the promoters of genes critical for cellular differentiation, such as CDKN1A, thereby preventing histone H3 'Lys-4' trimethylation (H3K4). Specifically deubiquitinates MYC in the nucleolus, leading to prevent MYC degradation by the proteasome: acts by specifically interacting with isoform 3 of FBXW7 (FBW7gamma) in the nucleolus and counteracting ubiquitination of MYC by the SCF(FBW7) complex. In contrast, it does not interact with isoform 1 of FBXW7 (FBW7alpha) in the nucleoplasm. Interacts to and regulates the actions of E3 ubiquitin-protein ligase NEDD4L over substrates such as NTRK1, KCNQ2 and KCNQ3, affecting their expression an functions. Deubiquitinates SOD2, regulates SOD2 protein stability. Deubiquitinase activity is required to control selective autophagy activation by ubiquitinated proteins. Promotes CEP63 stabilization through 'Lys-48'-linked deubiquitination leading to increased stability. Acts as a SUMO ligase to promote EXOSC10 sumoylation critical for the nucleolar RNA exosome function in rRNA processing. Binds to pre-rRNAs. The chain is Ubiquitin carboxyl-terminal hydrolase 36 (Usp36) from Mus musculus (Mouse).